A 321-amino-acid chain; its full sequence is Transmembrane and ubiquitin-like domain-containing protein 2 (321 aa).

The chain crosses the membrane as a helical span at residues 36–56 (VMVVAGVVVLILALVLAWLST). Disordered stretches follow at residues 87-131 (LVAG…GGVE) and 145-170 (KRQAGAGSSSPEAPLRSEDSTCLPPS). Positions 104–120 (EGNDEKAEEAGEGRGDS) are enriched in basic and acidic residues. The Ubiquitin-like domain occupies 174–247 (ITVRLKFLND…IHCHRSPPGS (74 aa)). A run of 2 helical transmembrane segments spans residues 266 to 286 (LGVNVGSLMVPVFVVLLGVVW) and 295 to 315 (FFTAPATVSLVGVTVFFSFLV).

It is found in the membrane. The chain is Transmembrane and ubiquitin-like domain-containing protein 2 (TMUB2) from Homo sapiens (Human).